The sequence spans 313 residues: Ribosomal RNA small subunit methyltransferase I (313 aa).

A disordered region spans residues 1 to 23; the sequence is MASIQLARTTRGGDGVARADGTR.

The protein belongs to the methyltransferase superfamily. RsmI family.

It is found in the cytoplasm. The catalysed reaction is cytidine(1402) in 16S rRNA + S-adenosyl-L-methionine = 2'-O-methylcytidine(1402) in 16S rRNA + S-adenosyl-L-homocysteine + H(+). In terms of biological role, catalyzes the 2'-O-methylation of the ribose of cytidine 1402 (C1402) in 16S rRNA. In Micromonospora olivasterospora, this protein is Ribosomal RNA small subunit methyltransferase I.